A 231-amino-acid chain; its full sequence is 7-cyano-7-deazaguanine synthase (231 aa).

ATP is bound at residue 8-18 (FSGGQDSTTCL). Zn(2+) is bound by residues C188, C197, C200, and C203.

This sequence belongs to the QueC family. The cofactor is Zn(2+).

The catalysed reaction is 7-carboxy-7-deazaguanine + NH4(+) + ATP = 7-cyano-7-deazaguanine + ADP + phosphate + H2O + H(+). It participates in purine metabolism; 7-cyano-7-deazaguanine biosynthesis. Catalyzes the ATP-dependent conversion of 7-carboxy-7-deazaguanine (CDG) to 7-cyano-7-deazaguanine (preQ(0)). In Enterobacter sp. (strain 638), this protein is 7-cyano-7-deazaguanine synthase.